Consider the following 534-residue polypeptide: Serine protease vicPb (534 aa).

The signal sequence occupies residues 1–17 (MLRYLLIPILYLQVVLG). Asn-34, Asn-65, and Asn-126 each carry an N-linked (GlcNAc...) asparagine glycan. Ser-174 acts as the Charge relay system in catalysis. Residues Asn-297, Asn-335, Asn-352, Asn-415, and Asn-437 are each glycosylated (N-linked (GlcNAc...) asparagine). Asp-451 acts as the Charge relay system in catalysis.

Belongs to the peptidase S28 family.

It participates in mycotoxin biosynthesis. In terms of biological role, serine protease, part of the gene cluster that mediates the biosynthesis of the secondary metabolite victorin, the molecular basis for Victoria blight of oats. Within the pathway, vicPa and vicPb are probably involved in the processing of the vicA1 and vicA2 precursors. The pathway starts with the processing of the precursor vicA1 by several endopeptidases including kexin proteases as well as the cluster-specific S28 family peptidases vicPa and vicPb to produce 7 identical copies of the hexapeptide Gly-Leu-Lys-Leu-Ala-Phe. After being excised from the precursor peptide, the core peptides are cyclized and modified post-translationally by enzymes encoded within the gene cluster. The ustYa family oxidase vicYb is required for the formation of the macrocycle in victorin and the copper amine oxidases (CAOs) vicK1 and vicK2 are responsible for converting victorin to the active form by oxidizing the N-terminal glycyl residue in the peptides to glyoxylate. Relaxed substrate specificity of enzymes in the victorin biosynthetic pathway results in a metabolic grid that produces a set of analogs including victorinines B, C, E or HV-toxin M. This is Serine protease vicPb from Bipolaris victoriae (strain FI3) (Victoria blight of oats agent).